The chain runs to 160 residues: UPF0225 protein PP_1119 (160 aa).

Belongs to the UPF0225 family.

This is UPF0225 protein PP_1119 from Pseudomonas putida (strain ATCC 47054 / DSM 6125 / CFBP 8728 / NCIMB 11950 / KT2440).